The primary structure comprises 321 residues: Cytochrome c biogenesis protein CcsA (321 aa).

The next 7 membrane-spanning stretches (helical) occupy residues 9 to 29 (ILTH…LITL), 44 to 64 (GMIA…VSSG), 68 to 88 (LSNL…LHTI), 143 to 163 (MLLS…LLII), 225 to 245 (VISL…VWAN), 259 to 273 (TWAF…IYLH), and 288 to 308 (VASI…LLGI).

The protein belongs to the CcmF/CycK/Ccl1/NrfE/CcsA family. In terms of assembly, may interact with Ccs1.

It is found in the plastid. Its subcellular location is the chloroplast thylakoid membrane. Its function is as follows. Required during biogenesis of c-type cytochromes (cytochrome c6 and cytochrome f) at the step of heme attachment. The sequence is that of Cytochrome c biogenesis protein CcsA from Zea mays (Maize).